A 117-amino-acid chain; its full sequence is Large ribosomal subunit protein bL20c (117 aa).

It belongs to the bacterial ribosomal protein bL20 family.

The protein resides in the plastid. Its subcellular location is the chloroplast. Binds directly to 23S ribosomal RNA and is necessary for the in vitro assembly process of the 50S ribosomal subunit. It is not involved in the protein synthesizing functions of that subunit. The protein is Large ribosomal subunit protein bL20c of Aethionema grandiflorum (Persian stone-cress).